A 265-amino-acid chain; its full sequence is Probable DNA replication complex GINS protein PSF3 (265 aa).

The disordered stretch occupies residues 180–265 (ISTSSNNKNN…KKRKRMFDDE (86 aa)). The segment covering 183-246 (SSNNKNNSSN…NNNNNSQNSS (64 aa)) has biased composition (low complexity). Basic residues predominate over residues 255–265 (VKKRKRMFDDE).

This sequence belongs to the GINS3/PSF3 family. Component of the GINS complex which is a heterotetramer of gins1, gins2, gins3 and gins4.

Its subcellular location is the nucleus. Functionally, the GINS complex plays an essential role in the initiation of DNA replication. This is Probable DNA replication complex GINS protein PSF3 (gins3) from Dictyostelium discoideum (Social amoeba).